A 600-amino-acid polypeptide reads, in one-letter code: Elongation factor 4 (600 aa).

One can recognise a tr-type G domain in the interval 13–194; that stretch reads DRIRNFCIIA…AIVERIPPPR (182 aa). Residues 25–30 and 141–144 contribute to the GTP site; these read DHGKST and NKID.

The protein belongs to the TRAFAC class translation factor GTPase superfamily. Classic translation factor GTPase family. LepA subfamily.

Its subcellular location is the cell membrane. The catalysed reaction is GTP + H2O = GDP + phosphate + H(+). In terms of biological role, required for accurate and efficient protein synthesis under certain stress conditions. May act as a fidelity factor of the translation reaction, by catalyzing a one-codon backward translocation of tRNAs on improperly translocated ribosomes. Back-translocation proceeds from a post-translocation (POST) complex to a pre-translocation (PRE) complex, thus giving elongation factor G a second chance to translocate the tRNAs correctly. Binds to ribosomes in a GTP-dependent manner. The protein is Elongation factor 4 of Rubrobacter xylanophilus (strain DSM 9941 / JCM 11954 / NBRC 16129 / PRD-1).